The sequence spans 207 residues: MKLLKISILRQSTFKNKKYNLFKIKTNRDFNPLVIGTKIRRNLIKETKGTKITQASLFVLNKKSKEKLYHSLNEFTNIEEISEKTNEIIKNLERLKIKLVNKNLKKKIICITLTKENSFFKEIYKTIKISNLNQKICTIKSHNVEIKLLLKIEKEKGIKFNPIETINFIIPKKNNENNSSLFLETIRNDQTFTELYQSLKLIYNQQI.

This sequence belongs to the RNA polymerase alpha chain family. As to quaternary structure, in plastids the minimal PEP RNA polymerase catalytic core is composed of four subunits: alpha, beta, beta', and beta''. When a (nuclear-encoded) sigma factor is associated with the core the holoenzyme is formed, which can initiate transcription.

It is found in the plastid. It localises to the chloroplast. The catalysed reaction is RNA(n) + a ribonucleoside 5'-triphosphate = RNA(n+1) + diphosphate. In terms of biological role, DNA-dependent RNA polymerase catalyzes the transcription of DNA into RNA using the four ribonucleoside triphosphates as substrates. The protein is DNA-directed RNA polymerase subunit alpha (rpoA) of Euglena anabaena (Euglenaria anabaena).